The primary structure comprises 257 residues: Imidazole glycerol phosphate synthase subunit HisF (257 aa).

Residues D12 and D131 contribute to the active site.

It belongs to the HisA/HisF family. In terms of assembly, heterodimer of HisH and HisF.

The protein resides in the cytoplasm. The enzyme catalyses 5-[(5-phospho-1-deoxy-D-ribulos-1-ylimino)methylamino]-1-(5-phospho-beta-D-ribosyl)imidazole-4-carboxamide + L-glutamine = D-erythro-1-(imidazol-4-yl)glycerol 3-phosphate + 5-amino-1-(5-phospho-beta-D-ribosyl)imidazole-4-carboxamide + L-glutamate + H(+). Its pathway is amino-acid biosynthesis; L-histidine biosynthesis; L-histidine from 5-phospho-alpha-D-ribose 1-diphosphate: step 5/9. In terms of biological role, IGPS catalyzes the conversion of PRFAR and glutamine to IGP, AICAR and glutamate. The HisF subunit catalyzes the cyclization activity that produces IGP and AICAR from PRFAR using the ammonia provided by the HisH subunit. The protein is Imidazole glycerol phosphate synthase subunit HisF of Paraburkholderia phytofirmans (strain DSM 17436 / LMG 22146 / PsJN) (Burkholderia phytofirmans).